A 141-amino-acid polypeptide reads, in one-letter code: ATP synthase epsilon chain (141 aa).

This sequence belongs to the ATPase epsilon chain family. In terms of assembly, F-type ATPases have 2 components, CF(1) - the catalytic core - and CF(0) - the membrane proton channel. CF(1) has five subunits: alpha(3), beta(3), gamma(1), delta(1), epsilon(1). CF(0) has three main subunits: a, b and c.

Its subcellular location is the cell inner membrane. Its function is as follows. Produces ATP from ADP in the presence of a proton gradient across the membrane. This chain is ATP synthase epsilon chain, found in Dechloromonas aromatica (strain RCB).